The chain runs to 184 residues: Ribosome-recycling factor (184 aa).

It belongs to the RRF family.

It localises to the cytoplasm. Responsible for the release of ribosomes from messenger RNA at the termination of protein biosynthesis. May increase the efficiency of translation by recycling ribosomes from one round of translation to another. In Hyphomonas neptunium (strain ATCC 15444), this protein is Ribosome-recycling factor.